The sequence spans 188 residues: Adenine phosphoribosyltransferase (188 aa).

This sequence belongs to the purine/pyrimidine phosphoribosyltransferase family. Homodimer.

It localises to the cytoplasm. The catalysed reaction is AMP + diphosphate = 5-phospho-alpha-D-ribose 1-diphosphate + adenine. Its pathway is purine metabolism; AMP biosynthesis via salvage pathway; AMP from adenine: step 1/1. Functionally, catalyzes a salvage reaction resulting in the formation of AMP, that is energically less costly than de novo synthesis. This chain is Adenine phosphoribosyltransferase, found in Paraburkholderia phytofirmans (strain DSM 17436 / LMG 22146 / PsJN) (Burkholderia phytofirmans).